We begin with the raw amino-acid sequence, 236 residues long: tRNA (guanine-N(7)-)-methyltransferase (236 aa).

The S-adenosyl-L-methionine site is built by Asp35, Glu60, Asn87, and Asp113. Asp113 is an active-site residue. Substrate is bound by residues Lys117 and Asp149. Residues 217–236 (EFEQHWQEIDNPGNAPTPDA) form a disordered region.

This sequence belongs to the class I-like SAM-binding methyltransferase superfamily. TrmB family.

It carries out the reaction guanosine(46) in tRNA + S-adenosyl-L-methionine = N(7)-methylguanosine(46) in tRNA + S-adenosyl-L-homocysteine. It participates in tRNA modification; N(7)-methylguanine-tRNA biosynthesis. Functionally, catalyzes the formation of N(7)-methylguanine at position 46 (m7G46) in tRNA. This Synechococcus sp. (strain CC9902) protein is tRNA (guanine-N(7)-)-methyltransferase.